Reading from the N-terminus, the 563-residue chain is MNTKELIASELASIIDSLDQEAILKLLETPKNSEMGDIAFPAFSLAKVERKAPQMIAAELAEKMNSQAFEKVVATGPYVNFFLDKSTISAQVLQAVTTEKEHYADQNIGKQENVVIDMSSPNIAKPFSIGHLRSTVIGDSLSHIFQKIGYQTVKVNHLGDWGKQFGMLIVAYKKWGDEEAVKAHPIDELLKLYVRINAEAENDPSLDEEAREWFRKLENGDEEALALWQWFRDESLVEFNRLYNELKVEFDSYNGEAFYNDKMDAVVDILSEKGLLLESEGAQVVNLEKYGIEHPALIKKSDGATLYITRDLAAALYRKNEYQFAKSIYVVGQEQSAHFKQLKAVLQEMGYDWSDDITHVPFGLVTKEGKKLSTRKGNVILLEPTVAEAVSRAKVQIEAKNPELENKDQVAHAVGVGAIKFYDLKTDRTNGYDFDLEAMVSFEGETGPYVQYAYARIQSILRKADFKPETAGNYSLNDTESWEIIKLIQDFPRIINRAADNFEPSIIAKFAISLAQSFNKYYAHTRILDESPERDSRLALSYATAVVLKEALRLLGVEAPEKM.

The short motif at 121–131 (PNIAKPFSIGH) is the 'HIGH' region element.

It belongs to the class-I aminoacyl-tRNA synthetase family. In terms of assembly, monomer.

It localises to the cytoplasm. It carries out the reaction tRNA(Arg) + L-arginine + ATP = L-arginyl-tRNA(Arg) + AMP + diphosphate. This Streptococcus pneumoniae (strain Hungary19A-6) protein is Arginine--tRNA ligase.